The primary structure comprises 803 residues: Volume-regulated anion channel subunit LRRC8B (803 aa).

Topologically, residues 1–25 are cytoplasmic; that stretch reads MITLTELKCLADAQSSYHILKPWWD. The chain crosses the membrane as a helical span at residues 26-46; the sequence is VFWYYITLIMLLVAVLAGALQ. Over 47–119 the chain is Extracellular; the sequence is LTQSRVLCCL…YEKQLHWFAK (73 aa). Intrachain disulfides connect cysteine 55-cysteine 304 and cysteine 109-cysteine 289. The N-linked (GlcNAc...) asparagine glycan is linked to asparagine 78. The chain crosses the membrane as a helical span at residues 120–140; the sequence is FFPYLVLLHTLIFAACSNFWL. The Cytoplasmic segment spans residues 141-261; it reads HYPSTSSRLE…DIIYRVYLKQ (121 aa). Phosphoserine is present on residues serine 186 and serine 196. Residues 262-282 form a helical membrane-spanning segment; it reads IIVKVILFVLIITYVPYFLTH. Topologically, residues 283-307 are extracellular; the sequence is ITLEIDCSVDVQAFTGYKRYQCVYS. A helical transmembrane segment spans residues 308–328; the sequence is LAEIFKVLASFYVILVILYGL. Topologically, residues 329 to 803 are cytoplasmic; sequence TSSYSLWWML…ERLQTCLDKC (475 aa). LRR repeat units follow at residues 464 to 486, 488 to 509, 511 to 532, 539 to 559, 562 to 582, 586 to 607, 609 to 630, 634 to 655, 657 to 678, 680 to 701, 703 to 724, 726 to 747, and 749 to 771; these read NLKE…AFLE, NLKI…VFHL, NLKE…MQLE, NLRT…VTDL, SLQK…NNLK, NLKS…IFSL, NLHE…ISFQ, NLSC…IGAL, NLEQ…LFLC, KLHY…IQYL, NLQY…LFQC, KLQC…VGEL, and NLTH…EGCQ.

Belongs to the LRRC8 family. Heterohexamer; oligomerizes with other LRRC8 proteins (LRRC8A, LRRC8C, LRRC8D and/or LRRC8E) to form a heterohexamer. In vivo, the subunit composition may depend primarily on expression levels, and heterooligomeric channels containing various proportions of the different LRRC8 proteins may coexist.

It is found in the cell membrane. Its subcellular location is the endoplasmic reticulum membrane. The enzyme catalyses chloride(in) = chloride(out). The catalysed reaction is iodide(out) = iodide(in). It catalyses the reaction taurine(out) = taurine(in). Its function is as follows. Non-essential component of the volume-regulated anion channel (VRAC, also named VSOAC channel), an anion channel required to maintain a constant cell volume in response to extracellular or intracellular osmotic changes. The VRAC channel conducts iodide better than chloride and can also conduct organic osmolytes like taurine. Channel activity requires LRRC8A plus at least one other family member (LRRC8B, LRRC8C, LRRC8D or LRRC8E); channel characteristics depend on the precise subunit composition. The chain is Volume-regulated anion channel subunit LRRC8B from Homo sapiens (Human).